A 1141-amino-acid chain; its full sequence is Tetratricopeptide repeat protein 17 (1141 aa).

Residues 295–328 (FTSYYTLGNIYAMLGEYNHSVLCYDHALQARPGF) form a TPR 1 repeat. Residues 340-382 (CQQKLEQKLEAQHRSLQRTLNELKEYQKQHDHYLRQQEILEKH) adopt a coiled-coil conformation. TPR repeat units lie at residues 619 to 652 (WLIL…APLQ), 689 to 722 (PLTF…TTKC), 1014 to 1048 (SWVL…APHQ), 1051 to 1084 (DVPL…APHF), and 1085 to 1118 (AVNH…QPEF).

It belongs to the TTC17 family. In terms of assembly, interacts with CATIP. In terms of tissue distribution, expressed in germ cells as well as in somatic cells of the testis (at protein level).

The protein localises to the cytoplasm. The protein resides in the cell membrane. Its subcellular location is the cytoskeleton. In terms of biological role, plays a role in primary ciliogenesis by modulating actin polymerization. This Homo sapiens (Human) protein is Tetratricopeptide repeat protein 17 (TTC17).